The sequence spans 697 residues: Elongation factor G 2 (697 aa).

Residues 6 to 281 (TNYRNFGIFA…AVVDFLPNPT (276 aa)) form the tr-type G domain. GTP contacts are provided by residues 15–22 (AHVDAGKT), 79–83 (DTPGH), and 133–136 (NKLD).

This sequence belongs to the TRAFAC class translation factor GTPase superfamily. Classic translation factor GTPase family. EF-G/EF-2 subfamily.

The protein localises to the cytoplasm. Its function is as follows. Catalyzes the GTP-dependent ribosomal translocation step during translation elongation. During this step, the ribosome changes from the pre-translocational (PRE) to the post-translocational (POST) state as the newly formed A-site-bound peptidyl-tRNA and P-site-bound deacylated tRNA move to the P and E sites, respectively. Catalyzes the coordinated movement of the two tRNA molecules, the mRNA and conformational changes in the ribosome. The sequence is that of Elongation factor G 2 from Trichodesmium erythraeum (strain IMS101).